Here is a 218-residue protein sequence, read N- to C-terminus: Adenylate kinase (218 aa).

10 to 15 (GAGKGT) is an ATP binding site. Residues 30–59 (STGDMLRAAVKAGTPLGIAAKKIMDEGGLV) form an NMP region. Residues threonine 31, arginine 36, 57–59 (GLV), 85–88 (GFPR), and glutamine 92 contribute to the AMP site. The LID stretch occupies residues 122 to 159 (GRRVHPASGRTYHVKFNPPKVAGKDDLTGEELIQRDDD). ATP is bound by residues arginine 123 and 132-133 (TY). Positions 156 and 167 each coordinate AMP. An ATP-binding site is contributed by glycine 203.

This sequence belongs to the adenylate kinase family. As to quaternary structure, monomer.

Its subcellular location is the cytoplasm. The enzyme catalyses AMP + ATP = 2 ADP. It participates in purine metabolism; AMP biosynthesis via salvage pathway; AMP from ADP: step 1/1. Catalyzes the reversible transfer of the terminal phosphate group between ATP and AMP. Plays an important role in cellular energy homeostasis and in adenine nucleotide metabolism. The polypeptide is Adenylate kinase (Janthinobacterium sp. (strain Marseille) (Minibacterium massiliensis)).